Reading from the N-terminus, the 145-residue chain is Ribonuclease H (145 aa).

Positions 1 to 141 constitute an RNase H type-1 domain; sequence MQEVIIYSDG…ADALANRGVA (141 aa). Aspartate 9, glutamate 47, aspartate 69, and aspartate 133 together coordinate Mg(2+).

This sequence belongs to the RNase H family. In terms of assembly, monomer. The cofactor is Mg(2+).

The protein localises to the cytoplasm. It catalyses the reaction Endonucleolytic cleavage to 5'-phosphomonoester.. In terms of biological role, endonuclease that specifically degrades the RNA of RNA-DNA hybrids. The polypeptide is Ribonuclease H (Cupriavidus pinatubonensis (strain JMP 134 / LMG 1197) (Cupriavidus necator (strain JMP 134))).